The chain runs to 422 residues: Elongation factor 1-gamma (422 aa).

A GST N-terminal domain is found at 1–82 (MALVLHAGKT…YVARLKADNP (82 aa)). The GST C-terminal domain maps to 87-215 (SLIDYAHIEQ…VKQTESVPPV (129 aa)). The interval 210 to 269 (ESVPPVPSAKKPSQPKETKSKAKEEPKKEAKKEPAKPKAEAAEEVEEAPKPKPKNPLDLL) is disordered. Residues 223 to 250 (QPKETKSKAKEEPKKEAKKEPAKPKAEA) show a composition bias toward basic and acidic residues. One can recognise an EF-1-gamma C-terminal domain in the interval 262–422 (PKNPLDLLPP…EALLDAKCFK (161 aa)).

EF-1 is composed of four subunits: alpha, beta, delta, and gamma.

In terms of biological role, probably plays a role in anchoring the complex to other cellular components. The protein is Elongation factor 1-gamma of Prunus avium (Cherry).